Consider the following 466-residue polypeptide: Ribulose bisphosphate carboxylase large chain (466 aa).

An N6,N6,N6-trimethyllysine modification is found at Lys5. Substrate is bound by residues Asn114 and Thr164. Lys166 functions as the Proton acceptor in the catalytic mechanism. Residue Lys168 participates in substrate binding. Residues Lys192, Asp194, and Glu195 each coordinate Mg(2+). Lys192 carries the post-translational modification N6-carboxylysine. The Proton acceptor role is filled by His285. 3 residues coordinate substrate: Arg286, His318, and Ser370.

Belongs to the RuBisCO large chain family. Type I subfamily. As to quaternary structure, heterohexadecamer of 8 large chains and 8 small chains; disulfide-linked. The disulfide link is formed within the large subunit homodimers. The cofactor is Mg(2+). Post-translationally, the disulfide bond which can form in the large chain dimeric partners within the hexadecamer appears to be associated with oxidative stress and protein turnover.

It localises to the plastid. The protein localises to the chloroplast. The enzyme catalyses 2 (2R)-3-phosphoglycerate + 2 H(+) = D-ribulose 1,5-bisphosphate + CO2 + H2O. It catalyses the reaction D-ribulose 1,5-bisphosphate + O2 = 2-phosphoglycolate + (2R)-3-phosphoglycerate + 2 H(+). In terms of biological role, ruBisCO catalyzes two reactions: the carboxylation of D-ribulose 1,5-bisphosphate, the primary event in carbon dioxide fixation, as well as the oxidative fragmentation of the pentose substrate in the photorespiration process. Both reactions occur simultaneously and in competition at the same active site. The sequence is that of Ribulose bisphosphate carboxylase large chain from Aesculus pavia (Red buckeye).